The primary structure comprises 296 residues: ATP synthase gamma chain (296 aa).

It belongs to the ATPase gamma chain family. In terms of assembly, F-type ATPases have 2 components, CF(1) - the catalytic core - and CF(0) - the membrane proton channel. CF(1) has five subunits: alpha(3), beta(3), gamma(1), delta(1), epsilon(1). CF(0) has three main subunits: a, b and c.

It localises to the cell inner membrane. Produces ATP from ADP in the presence of a proton gradient across the membrane. The gamma chain is believed to be important in regulating ATPase activity and the flow of protons through the CF(0) complex. The sequence is that of ATP synthase gamma chain from Methylorubrum extorquens (strain PA1) (Methylobacterium extorquens).